Consider the following 145-residue polypeptide: Large ribosomal subunit protein uL11 (145 aa).

It belongs to the universal ribosomal protein uL11 family. As to quaternary structure, part of the ribosomal stalk of the 50S ribosomal subunit. Interacts with L10 and the large rRNA to form the base of the stalk. L10 forms an elongated spine to which L12 dimers bind in a sequential fashion forming a multimeric L10(L12)X complex. Post-translationally, one or more lysine residues are methylated.

Forms part of the ribosomal stalk which helps the ribosome interact with GTP-bound translation factors. The polypeptide is Large ribosomal subunit protein uL11 (Corynebacterium glutamicum (strain ATCC 13032 / DSM 20300 / JCM 1318 / BCRC 11384 / CCUG 27702 / LMG 3730 / NBRC 12168 / NCIMB 10025 / NRRL B-2784 / 534)).